A 45-amino-acid chain; its full sequence is Large ribosomal subunit protein bL34 (45 aa).

Residues M1–V45 are disordered. The segment covering S10–V45 has biased composition (basic residues).

It belongs to the bacterial ribosomal protein bL34 family.

The polypeptide is Large ribosomal subunit protein bL34 (Parasynechococcus marenigrum (strain WH8102)).